The primary structure comprises 154 residues: Deoxyuridine 5'-triphosphate nucleotidohydrolase (154 aa).

Residues 74–76 (RSG), N87, 91–93 (TID), and K101 each bind substrate.

The protein belongs to the dUTPase family. The cofactor is Mg(2+).

It catalyses the reaction dUTP + H2O = dUMP + diphosphate + H(+). Its pathway is pyrimidine metabolism; dUMP biosynthesis; dUMP from dCTP (dUTP route): step 2/2. Functionally, this enzyme is involved in nucleotide metabolism: it produces dUMP, the immediate precursor of thymidine nucleotides and it decreases the intracellular concentration of dUTP so that uracil cannot be incorporated into DNA. In Cytophaga hutchinsonii (strain ATCC 33406 / DSM 1761 / CIP 103989 / NBRC 15051 / NCIMB 9469 / D465), this protein is Deoxyuridine 5'-triphosphate nucleotidohydrolase.